Consider the following 473-residue polypeptide: MSTNEGSLWGGRFAGGPAPALAALSKSTHFDWALAPYDIQASVAHARVLRKAGLLTDEQLGALVEGLEQLGRDVASGVFVPADTDEDVHGALERGLIERVGPDIGGRLRAGRSRNDQVATLFRMWLRDAAGRISEGVLDVVQALADQAGAHPDAIMPGKTHLQAAQPVLLAHHLLAHAQPLLRDVDRLVDWDRRTAVSPYGAGALAGSSLGLDPDAIALDLGFTAAADNSIDATSSRDFAAEAGFVFAMIGIDLSRLSEDIILWGTTEFGYVTLDDSWSTGSSIMPQKKNPDIAELARGKTGRLIGNLTGLLATLKAQPLAYNRDLQEDKEPLFDSVSQLELLLPAMAGLVATLRFHTERMAQLAPAGFTLATDLAEWMVRQGIPFRVAHEAAGEAVRVAEARGVGLEDLTDEEFAAIHPELTGDVRAVLTTAGSVASRDARGGTAPERVAEQRELVLARLNVLRGQNGRHPG.

This sequence belongs to the lyase 1 family. Argininosuccinate lyase subfamily.

It is found in the cytoplasm. The enzyme catalyses 2-(N(omega)-L-arginino)succinate = fumarate + L-arginine. It functions in the pathway amino-acid biosynthesis; L-arginine biosynthesis; L-arginine from L-ornithine and carbamoyl phosphate: step 3/3. The sequence is that of Argininosuccinate lyase from Mycobacteroides abscessus (strain ATCC 19977 / DSM 44196 / CCUG 20993 / CIP 104536 / JCM 13569 / NCTC 13031 / TMC 1543 / L948) (Mycobacterium abscessus).